The sequence spans 260 residues: Peptidase inhibitor 15-A (260 aa).

Positions 1–21 are cleaved as a signal peptide; that stretch reads MNENRLAIDILLLCISCGASA. Residues 22-62 constitute a propeptide that is removed on maturation; the sequence is LAGFSPTASSSLPATNLTDIGFAPPKYLTEAANIPKTRRKR. N-linked (GlcNAc...) asparagine glycans are attached at residues asparagine 37 and asparagine 126. Residues 73–213 form the SCP domain; it reads LDYHNKVRGK…KRATYLVCNY (141 aa).

The protein belongs to the CRISP family.

The protein resides in the secreted. Serine protease inhibitor which displays weak inhibitory activity against trypsin. May play a role in facial patterning during embryonic development. In Danio rerio (Zebrafish), this protein is Peptidase inhibitor 15-A (pi15a).